A 198-amino-acid chain; its full sequence is Recombination protein RecR (198 aa).

The C4-type zinc finger occupies 57–72 (CSVCGHITDRDPCYIC). In terms of domain architecture, Toprim spans 80–175 (SVVCVVQEPK…KVTRIAHGLP (96 aa)).

This sequence belongs to the RecR family.

May play a role in DNA repair. It seems to be involved in an RecBC-independent recombinational process of DNA repair. It may act with RecF and RecO. This chain is Recombination protein RecR, found in Bacillus anthracis (strain A0248).